The following is a 380-amino-acid chain: Alkaline protease (380 aa).

The N-terminal stretch at 1 to 27 is a signal peptide; the sequence is MKKPLGKIVASTALLISVAFSSSIASA. Positions 28–111 are excised as a propeptide; that stretch reads AEEAKEKYLI…IEEDAEVTTM (84 aa). In terms of domain architecture, Inhibitor I9 spans 34 to 111; that stretch reads KYLIGFNEQE…IEEDAEVTTM (78 aa). A Ca(2+)-binding site is contributed by Gln-113. The 264-residue stretch at 116–379 folds into the Peptidase S8 domain; that stretch reads PWGISRVQAP…SGLVNAEAAT (264 aa). Asp-143 serves as the catalytic Charge relay system. Asp-151 serves as a coordination point for Ca(2+). His-173 functions as the Charge relay system in the catalytic mechanism. Ca(2+)-binding residues include Leu-184, Asn-186, Ile-188, Val-190, Ala-274, Tyr-276, and Ala-279. Ser-326 serves as the catalytic Charge relay system.

It belongs to the peptidase S8 family. Requires Ca(2+) as cofactor.

It localises to the secreted. The protein is Alkaline protease of Shouchella clausii (Alkalihalobacillus clausii).